The primary structure comprises 177 residues: O-acetyl-ADP-ribose deacetylase (177 aa).

One can recognise a Macro domain in the interval 1 to 175 (MKSRIHVLQG…LYNRLLTQQG (175 aa)). Residues 11–12 (DI), Asn-25, 33–35 (GVD), and 122–126 (STGVY) contribute to the substrate site. Residue Asp-35 is the Proton acceptor of the active site.

The protein belongs to the MacroD-type family. YmdB subfamily. As to quaternary structure, homodimer. Interacts with RNase III.

It catalyses the reaction 3''-O-acetyl-ADP-D-ribose + H2O = ADP-D-ribose + acetate + H(+). It carries out the reaction 2''-O-acetyl-ADP-D-ribose + H2O = ADP-D-ribose + acetate + H(+). In terms of biological role, deacetylates O-acetyl-ADP ribose to yield ADP-ribose and free acetate. Down-regulates ribonuclease 3 (RNase III) activity. Acts by interacting directly with the region of the ribonuclease that is required for dimerization/activation. This chain is O-acetyl-ADP-ribose deacetylase, found in Escherichia fergusonii (strain ATCC 35469 / DSM 13698 / CCUG 18766 / IAM 14443 / JCM 21226 / LMG 7866 / NBRC 102419 / NCTC 12128 / CDC 0568-73).